The primary structure comprises 426 residues: Serine--tRNA ligase (426 aa).

231 to 233 (TLE) lines the L-serine pocket. Residue 262–264 (RSE) participates in ATP binding. Glutamate 285 contributes to the L-serine binding site. 349 to 352 (EISS) contributes to the ATP binding site. Serine 385 contributes to the L-serine binding site.

Belongs to the class-II aminoacyl-tRNA synthetase family. Type-1 seryl-tRNA synthetase subfamily. As to quaternary structure, homodimer. The tRNA molecule binds across the dimer.

It is found in the cytoplasm. It catalyses the reaction tRNA(Ser) + L-serine + ATP = L-seryl-tRNA(Ser) + AMP + diphosphate + H(+). The enzyme catalyses tRNA(Sec) + L-serine + ATP = L-seryl-tRNA(Sec) + AMP + diphosphate + H(+). The protein operates within aminoacyl-tRNA biosynthesis; selenocysteinyl-tRNA(Sec) biosynthesis; L-seryl-tRNA(Sec) from L-serine and tRNA(Sec): step 1/1. In terms of biological role, catalyzes the attachment of serine to tRNA(Ser). Is also able to aminoacylate tRNA(Sec) with serine, to form the misacylated tRNA L-seryl-tRNA(Sec), which will be further converted into selenocysteinyl-tRNA(Sec). In Malacoplasma penetrans (strain HF-2) (Mycoplasma penetrans), this protein is Serine--tRNA ligase.